We begin with the raw amino-acid sequence, 419 residues long: MVSESHHEALAAPPVTTVATVLPSNATEPASPGEGKEDAFSKLKEKFMNELHKIPLPPWALIAIAIVAVLLVLTCCFCICKKCLFKKKNKKKGKEKGGKNAINMKDVKDLGKTMKDQDDDAETGLTDGEEKEEPKEEEKLGKLQYSLDYDFQNNQLLVGIIQAAELPALDMGGTSDPYVKVFLLPDKKKKFETKVHRKTLNPVFNEQFTFKVPYSELGGKTLVMAVYDFDRFSKHDIIGEFKVPMNTVDFGHVTEEWRDLQSAEKEEQEKLGDICFSLRYVPTAGKLTVVILEAKNLKKMDVGGLSDPYVKIHLMQNGKRLKKKETTIKKNTLNPYYNESFSFEVPFEQIQKVQVVVTVLDYDKIGKNDAIGKVFVGYNSTGAELRHWSDMLANPRRPIAQWHTLQVEEEVDAMLAVKK.

The Vesicular segment spans residues 1–58 (MVSESHHEALAAPPVTTVATVLPSNATEPASPGEGKEDAFSKLKEKFMNELHKIPLPP). Residue N25 is glycosylated (N-linked (GlcNAc...) asparagine). A helical transmembrane segment spans residues 59 to 80 (WALIAIAIVAVLLVLTCCFCIC). S-palmitoyl cysteine attachment occurs at residues C75, C76, C78, C80, and C83. Topologically, residues 81-419 (KKCLFKKKNK…EVDAMLAVKK (339 aa)) are cytoplasmic. The segment at 108-139 (KDLGKTMKDQDDDAETGLTDGEEKEEPKEEEK) is disordered. Over residues 117-131 (QDDDAETGLTDGEEK) the composition is skewed to acidic residues. The residue at position 126 (T126) is a Phosphothreonine. A phospholipid binding region spans residues 133–379 (EPKEEEKLGK…AIGKVFVGYN (247 aa)). The C2 1 domain occupies 139–258 (KLGKLQYSLD…DFGHVTEEWR (120 aa)). Residues L169, D170, and D176 each coordinate Ca(2+). Y227 carries the phosphotyrosine modification. The Ca(2+) site is built by D228, F229, D230, S233, K234, and D236. The residue at position 262 (S262) is a Phosphoserine. The region spanning 270-403 (KLGDICFSLR…NPRRPIAQWH (134 aa)) is the C2 2 domain. Positions 301 and 307 each coordinate Ca(2+). S340 and S342 each carry phosphoserine. Ca(2+) contacts are provided by D361, D363, and D369.

Belongs to the synaptotagmin family. As to quaternary structure, homotetramer. Heterodimer; heterodimerizes with SYT2 in presence of calcium. Interacts with SCAMP5. Interacts with STON2. Forms a complex with SV2B, syntaxin 1 and SNAP25. Interacts with SV2A, SV2B and SV2C. Interacts with RIMS1. Interacts with PRRT2. Interacts with DNAJC5 in a phosphorylation-dependent manner. Interacts (via N-terminus) with RAB3A. Interacts with SYT12. Interacts with calmodulin. Interacts with DNM1 (via C-terminal proline-rich domain (PRD)); this interaction facilitates vesicle fission during clathrin-mediated endocytosis (CME). The cofactor is Ca(2+). Post-translationally, glycosylated.

It localises to the cytoplasmic vesicle. The protein resides in the secretory vesicle membrane. Its subcellular location is the secretory vesicle. The protein localises to the synaptic vesicle membrane. It is found in the chromaffin granule membrane. It localises to the cytoplasm. Calcium sensor that participates in triggering neurotransmitter release at the synapse. May have a regulatory role in the membrane interactions during trafficking of synaptic vesicles at the active zone of the synapse. It binds acidic phospholipids with a specificity that requires the presence of both an acidic head group and a diacyl backbone. A Ca(2+)-dependent interaction between synaptotagmin and putative receptors for activated protein kinase C has also been reported. It can bind to at least three additional proteins in a Ca(2+)-independent manner; these are neurexins, syntaxin and AP2. Plays a role in dendrite formation by melanocytes. The protein is Synaptotagmin-1 of Pongo abelii (Sumatran orangutan).